Here is a 237-residue protein sequence, read N- to C-terminus: Ribonuclease PH (237 aa).

Phosphate-binding positions include R86 and 124–126 (GTR).

It belongs to the RNase PH family. In terms of assembly, homohexameric ring arranged as a trimer of dimers.

It catalyses the reaction tRNA(n+1) + phosphate = tRNA(n) + a ribonucleoside 5'-diphosphate. Its function is as follows. Phosphorolytic 3'-5' exoribonuclease that plays an important role in tRNA 3'-end maturation. Removes nucleotide residues following the 3'-CCA terminus of tRNAs; can also add nucleotides to the ends of RNA molecules by using nucleoside diphosphates as substrates, but this may not be physiologically important. Probably plays a role in initiation of 16S rRNA degradation (leading to ribosome degradation) during starvation. The polypeptide is Ribonuclease PH (Shewanella loihica (strain ATCC BAA-1088 / PV-4)).